We begin with the raw amino-acid sequence, 316 residues long: Porphobilinogen deaminase (316 aa).

Cys245 carries the post-translational modification S-(dipyrrolylmethanemethyl)cysteine.

Belongs to the HMBS family. In terms of assembly, monomer. Requires dipyrromethane as cofactor.

It catalyses the reaction 4 porphobilinogen + H2O = hydroxymethylbilane + 4 NH4(+). It participates in porphyrin-containing compound metabolism; protoporphyrin-IX biosynthesis; coproporphyrinogen-III from 5-aminolevulinate: step 2/4. It functions in the pathway porphyrin-containing compound metabolism; chlorophyll biosynthesis. Tetrapolymerization of the monopyrrole PBG into the hydroxymethylbilane pre-uroporphyrinogen in several discrete steps. The chain is Porphobilinogen deaminase from Prochlorococcus marinus (strain MIT 9515).